Consider the following 80-residue polypeptide: Large ribosomal subunit protein eL14 (80 aa).

The protein belongs to the eukaryotic ribosomal protein eL14 family.

This chain is Large ribosomal subunit protein eL14, found in Methanocaldococcus jannaschii (strain ATCC 43067 / DSM 2661 / JAL-1 / JCM 10045 / NBRC 100440) (Methanococcus jannaschii).